A 64-amino-acid polypeptide reads, in one-letter code: Large ribosomal subunit protein uL30 (64 aa).

This sequence belongs to the universal ribosomal protein uL30 family. As to quaternary structure, part of the 50S ribosomal subunit.

This Methylorubrum populi (strain ATCC BAA-705 / NCIMB 13946 / BJ001) (Methylobacterium populi) protein is Large ribosomal subunit protein uL30.